The sequence spans 112 residues: Nucleoid-associated protein FTN_1196 (112 aa).

The segment at 1 to 27 is disordered; it reads MNFDMSKLMQQAQKMQEQMKKAQQERE. Residues 17–27 show a composition bias toward basic and acidic residues; sequence EQMKKAQQERE.

Belongs to the YbaB/EbfC family. As to quaternary structure, homodimer.

It is found in the cytoplasm. The protein resides in the nucleoid. Binds to DNA and alters its conformation. May be involved in regulation of gene expression, nucleoid organization and DNA protection. This chain is Nucleoid-associated protein FTN_1196, found in Francisella tularensis subsp. novicida (strain U112).